The following is a 450-amino-acid chain: Tubulin alpha-6 chain (450 aa).

GTP is bound by residues glutamine 11, glutamate 71, glycine 144, threonine 145, threonine 179, asparagine 206, and asparagine 228. Glutamate 71 provides a ligand contact to Mg(2+). Glutamate 254 is a catalytic residue.

It belongs to the tubulin family. In terms of assembly, dimer of alpha and beta chains. A typical microtubule is a hollow water-filled tube with an outer diameter of 25 nm and an inner diameter of 15 nM. Alpha-beta heterodimers associate head-to-tail to form protofilaments running lengthwise along the microtubule wall with the beta-tubulin subunit facing the microtubule plus end conferring a structural polarity. Microtubules usually have 13 protofilaments but different protofilament numbers can be found in some organisms and specialized cells. Mg(2+) serves as cofactor. In terms of processing, undergoes a tyrosination/detyrosination cycle, the cyclic removal and re-addition of a C-terminal tyrosine residue by the enzymes tubulin tyrosine carboxypeptidase (TTCP) and tubulin tyrosine ligase (TTL), respectively.

It localises to the cytoplasm. Its subcellular location is the cytoskeleton. It catalyses the reaction GTP + H2O = GDP + phosphate + H(+). In terms of biological role, tubulin is the major constituent of microtubules, a cylinder consisting of laterally associated linear protofilaments composed of alpha- and beta-tubulin heterodimers. Microtubules grow by the addition of GTP-tubulin dimers to the microtubule end, where a stabilizing cap forms. Below the cap, tubulin dimers are in GDP-bound state, owing to GTPase activity of alpha-tubulin. The chain is Tubulin alpha-6 chain (TUBA6) from Zea mays (Maize).